Reading from the N-terminus, the 406-residue chain is Synaptic vesicle membrane protein VAT-1 homolog (406 aa).

A disordered region spans residues 1 to 57; it reads MSAEREAAEAATVAAATEAGAETGTGAGEGAPSQPPTVEVASDPQPPPAPEASASAS. Ser2 is modified (N-acetylserine). Ser2 carries the phosphoserine modification. The span at 9 to 22 shows a compositional bias: low complexity; sequence EAATVAAATEAGAE. Ser33 and Ser42 each carry phosphoserine.

It belongs to the zinc-containing alcohol dehydrogenase family. Quinone oxidoreductase subfamily.

The protein localises to the cytoplasm. Its subcellular location is the mitochondrion outer membrane. Its function is as follows. Plays a part in calcium-regulated keratinocyte activation in epidermal repair mechanisms. Has no effect on cell proliferation. Possesses ATPase activity. Negatively regulates mitochondrial fusion in cooperation with mitofusin proteins (MFN1-2). The chain is Synaptic vesicle membrane protein VAT-1 homolog (Vat1) from Mus musculus (Mouse).